A 398-amino-acid polypeptide reads, in one-letter code: Phosphoglycerate kinase (398 aa).

Substrate contacts are provided by residues 23–25 (DLN), arginine 38, 61–64 (HFGR), arginine 119, and arginine 152. ATP contacts are provided by residues lysine 202, glutamate 324, and 354–357 (GGDT).

The protein belongs to the phosphoglycerate kinase family. As to quaternary structure, monomer.

The protein resides in the cytoplasm. The catalysed reaction is (2R)-3-phosphoglycerate + ATP = (2R)-3-phospho-glyceroyl phosphate + ADP. Its pathway is carbohydrate degradation; glycolysis; pyruvate from D-glyceraldehyde 3-phosphate: step 2/5. The sequence is that of Phosphoglycerate kinase from Bradyrhizobium diazoefficiens (strain JCM 10833 / BCRC 13528 / IAM 13628 / NBRC 14792 / USDA 110).